The primary structure comprises 125 residues: Large ribosomal subunit protein bL12 (125 aa).

This sequence belongs to the bacterial ribosomal protein bL12 family. In terms of assembly, homodimer. Part of the ribosomal stalk of the 50S ribosomal subunit. Forms a multimeric L10(L12)X complex, where L10 forms an elongated spine to which 2 to 4 L12 dimers bind in a sequential fashion. Binds GTP-bound translation factors.

Functionally, forms part of the ribosomal stalk which helps the ribosome interact with GTP-bound translation factors. Is thus essential for accurate translation. The sequence is that of Large ribosomal subunit protein bL12 from Cereibacter sphaeroides (Rhodobacter sphaeroides).